Here is a 402-residue protein sequence, read N- to C-terminus: Multidrug resistance protein MdtH (402 aa).

Over 1-12 (MSRVSQARNLGK) the chain is Cytoplasmic. The chain crosses the membrane as a helical span at residues 13-33 (YFLLIDNMLVVLGFFVVFPLI). Residues 34 to 98 (SIRFVDQMGW…GFATMGIAHE (65 aa)) lie on the Periplasmic side of the membrane. The helical transmembrane segment at 99 to 116 (PWLLWFSCFLSGLGGTLF) threads the bilayer. Topologically, residues 117–138 (DPPRSALVVKLIRPEQRGRFFS) are cytoplasmic. Residues 139–159 (LLMMQDSAGAVIGALLGSWLL) traverse the membrane as a helical segment. Over 160–164 (QYDFR) the chain is Periplasmic. Residues 165-185 (LVCATGAILFILCALFNAWLL) form a helical membrane-spanning segment. Over 186-213 (PAWKLSTVRTPVREGMRRVMSDKRFVTY) the chain is Cytoplasmic. Residues 214–234 (VLTLAGYYMLAVQVMLMLPIM) traverse the membrane as a helical segment. The Periplasmic portion of the chain corresponds to 235–243 (VNDIAGSPA). A helical membrane pass occupies residues 244-264 (AVKWMYAIEACLSLTLLYPIA). The Cytoplasmic segment spans residues 265 to 276 (RWSEKRFRLEHR). The helical transmembrane segment at 277–297 (LMAGLLVMSLSMIPIGMVGNL) threads the bilayer. Residues 298–299 (QQ) are Periplasmic-facing. Residues 300-320 (LFTLICAFYIGSVIAEPARET) traverse the membrane as a helical segment. Over 321–339 (LSASLADARARGSYMGFSR) the chain is Cytoplasmic. A helical membrane pass occupies residues 340–360 (LGLAIGGAIGYIGGGWLFDMG). Residues 361 to 367 (KALAQPE) are Periplasmic-facing. A helical membrane pass occupies residues 368-388 (LPWMMLGIIGFITFLALGWQF). The Cytoplasmic segment spans residues 389–402 (SHKRTPRRMLEPGA).

Belongs to the major facilitator superfamily. DHA1 family. MdtH (TC 2.A.1.2.21) subfamily.

The protein resides in the cell inner membrane. The protein is Multidrug resistance protein MdtH of Salmonella schwarzengrund (strain CVM19633).